The chain runs to 517 residues: E3 ubiquitin-protein ligase TRIM65 (517 aa).

Ala2 bears the N-acetylalanine mark. Residues 12-51 form an RING-type zinc finger; the sequence is CAICLGLYQDPVTLPCGHNFCGACIRDWWDRCGKACPECR. The disordered stretch occupies residues 75–94; the sequence is AGPARDPGPDPGPGPDPAAR. The B box-type zinc finger occupies 90 to 137; the sequence is DPAARCPRHGRPLELFCRTEGRCVCSVCTVRECRLHERALLDAERLKR. Cys95, His98, Cys117, and His125 together coordinate Zn(2+). Positions 139 to 227 form a coiled coil; it reads AQLRASLEVT…QRLRVHLEAV (89 aa). Residue Ser185 is modified to Phosphoserine. Residue Lys206 forms a (Microbial infection) Glycyl lysine isopeptide (Lys-Gly) (interchain with G-Cter in ubiquitin) linkage. The region spanning 313–506 is the B30.2/SPRY domain; the sequence is APVPSTVCPL…LTLCHQPGAV (194 aa).

This sequence belongs to the TRIM/RBCC family. In terms of assembly, homo-multimerizes. Interacts with ARRDC4.

The protein localises to the cytoplasm. The catalysed reaction is S-ubiquitinyl-[E2 ubiquitin-conjugating enzyme]-L-cysteine + [acceptor protein]-L-lysine = [E2 ubiquitin-conjugating enzyme]-L-cysteine + N(6)-ubiquitinyl-[acceptor protein]-L-lysine.. The protein operates within protein modification; protein ubiquitination. Its function is as follows. E3 ubiquitin ligase that plays a role in several processes including innate immnity, autophagy or inflammation. Negatively regulates miRNAs by modulating the ubiquitination and stability of TNRC6A, a protein involved in RNA-mediated gene silencing by both micro-RNAs (miRNAs) and short interfering RNAs. This ubiquitination results in the suppressed expression of miR-138-5p leading to increased autophagy. Upon enteroviral infection, promotes 'Lys-63'-mediated ubiquitination activation of IFIH1/MDA5 leading to innate signaling cascade. Mechanistically, selectively recognizes MDA5 filaments that occur on dsRNAs. Plays also a role in limitation of inflammation through different mechanisms. First, promotes 'Lys-48'-mediated ubiquitination of VCAM1 leading to its degradation and limitation of LPS-induced lung inflammation. In addition, negatively regulates inflammasome activation by promoting 'lys48'-linked ubiquitination of NLRP3 which is critical for the inhibition of NLRP3 inflammasome activation in resting macrophages. This chain is E3 ubiquitin-protein ligase TRIM65 (TRIM65), found in Homo sapiens (Human).